Consider the following 452-residue polypeptide: Transcription factor AP-2-delta (452 aa).

Ser239 is subject to Phosphoserine; by PKA. An H-S-H (helix-span-helix), dimerization region spans residues 280–410; that stretch reads RRKAANVTLL…VLSEMLNYLE (131 aa). Residues 416–452 form a disordered region; the sequence is KNGGAADSGQGHANSEKAPLRKTSEAAVKEGKTEKTD. The span at 429–452 shows a compositional bias: basic and acidic residues; that stretch reads NSEKAPLRKTSEAAVKEGKTEKTD.

The protein belongs to the AP-2 family. In terms of assembly, binds DNA as a dimer. Can form homodimers or heterodimers with other AP-2 family members. As to expression, highly expressed in brain, placenta, skeletal muscle, thymus, small intestine, and prostate, and expressed at lower levels in leukocyte, spleen, testis, ovary and colon. Barely detectable in heart, kidney, liver, lung or pancreas.

The protein localises to the nucleus. Functionally, sequence-specific DNA-binding protein that interacts with inducible viral and cellular enhancer elements to regulate transcription of selected genes. AP-2 factors bind to the consensus sequence 5'-GCCNNNGGC-3' and activate genes involved in a large spectrum of important biological functions including proper eye, face, body wall, limb and neural tube development. They also suppress a number of genes including MCAM/MUC18, C/EBP alpha and MYC. This chain is Transcription factor AP-2-delta, found in Homo sapiens (Human).